A 405-amino-acid polypeptide reads, in one-letter code: Cysteine desulfurase IscS (405 aa).

Residues 75–76 (AT), Asn-156, Gln-184, and 204–206 (SAH) each bind pyridoxal 5'-phosphate. Lys-207 bears the N6-(pyridoxal phosphate)lysine mark. Thr-244 is a binding site for pyridoxal 5'-phosphate. The active-site Cysteine persulfide intermediate is the Cys-329. Cys-329 provides a ligand contact to [2Fe-2S] cluster.

Belongs to the class-V pyridoxal-phosphate-dependent aminotransferase family. NifS/IscS subfamily. Homodimer. Forms a heterotetramer with IscU, interacts with other sulfur acceptors. Requires pyridoxal 5'-phosphate as cofactor.

It localises to the cytoplasm. It catalyses the reaction (sulfur carrier)-H + L-cysteine = (sulfur carrier)-SH + L-alanine. It participates in cofactor biosynthesis; iron-sulfur cluster biosynthesis. Functionally, master enzyme that delivers sulfur to a number of partners involved in Fe-S cluster assembly, tRNA modification or cofactor biosynthesis. Catalyzes the removal of elemental sulfur atoms from cysteine to produce alanine. Functions as a sulfur delivery protein for Fe-S cluster synthesis onto IscU, an Fe-S scaffold assembly protein, as well as other S acceptor proteins. In Acinetobacter baumannii (strain SDF), this protein is Cysteine desulfurase IscS.